A 204-amino-acid polypeptide reads, in one-letter code: Arginine exporter protein ArgO (204 aa).

A run of 6 helical transmembrane segments spans residues 1 to 21, 37 to 57, 67 to 87, 111 to 131, 154 to 174, and 179 to 199; these read MWAV…PLGP, LMVA…GIFG, LLLG…GWGA, IIAT…DTFV, TASF…APWL, and VQRV…LQLA.

The protein belongs to the LysE/ArgO transporter (TC 2.A.75) family.

It localises to the cell inner membrane. It catalyses the reaction L-arginine(in) = L-arginine(out). Involved in the export of arginine. Important to control the intracellular level of arginine and the correct balance between arginine and lysine. The protein is Arginine exporter protein ArgO of Pectobacterium atrosepticum (strain SCRI 1043 / ATCC BAA-672) (Erwinia carotovora subsp. atroseptica).